The chain runs to 548 residues: C-type lectin domain family 4 member F (548 aa).

Residues 1-42 are Cytoplasmic-facing; the sequence is MKEAELNRDMARYCTDNQCVSLQPQGLGPKSAALMAPRTLRH. The chain crosses the membrane as a helical; Signal-anchor for type II membrane protein span at residues 43–69; that stretch reads VQVILALMVVTVIFSLLALFVVASQPW. Residues 70 to 548 lie on the Extracellular side of the membrane; the sequence is RPEWNKEPPS…STGWSAARVG (479 aa). Residues N86, N92, N115, N132, N209, and N255 are each glycosylated (N-linked (GlcNAc...) asparagine). The C-type lectin domain maps to 438 to 538; it reads KFCTSQGAHL…GSSYPWVCKK (101 aa). 2 disulfide bridges follow: C440–C536 and C516–C528.

Kupffer cells.

It is found in the membrane. Its function is as follows. Receptor with an affinity for galactose and fucose. Could be involved in endocytosis. The sequence is that of C-type lectin domain family 4 member F (Clec4f) from Mus musculus (Mouse).